Here is a 214-residue protein sequence, read N- to C-terminus: GTP cyclohydrolase 1 (214 aa).

Residues Cys-108, His-111, and Cys-179 each contribute to the Zn(2+) site.

The protein belongs to the GTP cyclohydrolase I family. Toroid-shaped homodecamer, composed of two pentamers of five dimers.

It carries out the reaction GTP + H2O = 7,8-dihydroneopterin 3'-triphosphate + formate + H(+). It participates in cofactor biosynthesis; 7,8-dihydroneopterin triphosphate biosynthesis; 7,8-dihydroneopterin triphosphate from GTP: step 1/1. This is GTP cyclohydrolase 1 from Shewanella putrefaciens (strain CN-32 / ATCC BAA-453).